We begin with the raw amino-acid sequence, 544 residues long: Propane 2-monooxygenase, hydroxylase component large subunit (544 aa).

Residues E97, E127, H130, E192, E226, and H229 each coordinate Fe cation.

Belongs to the TmoA/XamoA family. In terms of assembly, the propane 2-monooxygenase multicomponent enzyme system is composed of an electron transfer component and a monooxygenase component interacting with the effector protein PrmD. The electron transfer component is composed of a reductase (PrmB), and the monooxygenase component is formed by a large subunit (PrmA) and a small subunit (PrmC). Probably requires the presence of the chaperonin-like protein PrmG to ensure a productive folding, resulting of a soluble PrmA, which leads to the active form of PrmABCD. Fe(2+) serves as cofactor.

The catalysed reaction is propane + NADH + O2 + H(+) = propan-2-ol + NAD(+) + H2O. Functionally, component of the propane 2-monooxygenase multicomponent enzyme system which is involved in the degradation of propane via the O2-dependent hydroxylation of propane. Also able to catalyze the oxidation the water contaminant N-nitrosodimethylamine (NDMA). This chain is Propane 2-monooxygenase, hydroxylase component large subunit, found in Rhodococcus jostii (strain RHA1).